A 55-amino-acid polypeptide reads, in one-letter code: Large ribosomal subunit protein bL33 (55 aa).

Belongs to the bacterial ribosomal protein bL33 family.

In Orientia tsutsugamushi (strain Boryong) (Rickettsia tsutsugamushi), this protein is Large ribosomal subunit protein bL33.